A 306-amino-acid chain; its full sequence is MSNWLVDKLIPSIMRSEVKKSSVPEGLWHKCPSCEAVLYRPELEKTLDVCPKCNHHMRIGARARIDIFLDAEGRTELGADLEPVDRLKFRDGKKYKDRLVAAQKQTGEKDALVSMSGTLLGMPVVVSAFEFSFMGGSMGAIVGERFVRAANYALENRCPMVCFSASGGARMQEALISLMQMAKTSAVLARLREEGIPFISVLTDPVYGGVSASLAMLGDVIVGEPKALIGFAGPRVIEQTVREKLPEGFQRSEFLLEHGAIDLIIDRRELRPRLGNLLAQLTGKPTPKFVAAPIEPIVVPPVPANV.

Residues 27–296 (LWHKCPSCEA…PKFVAAPIEP (270 aa)) form the CoA carboxyltransferase N-terminal domain. The Zn(2+) site is built by Cys31, Cys34, Cys50, and Cys53. The C4-type zinc-finger motif lies at 31–53 (CPSCEAVLYRPELEKTLDVCPKC).

Belongs to the AccD/PCCB family. In terms of assembly, acetyl-CoA carboxylase is a heterohexamer composed of biotin carboxyl carrier protein (AccB), biotin carboxylase (AccC) and two subunits each of ACCase subunit alpha (AccA) and ACCase subunit beta (AccD). Zn(2+) is required as a cofactor.

It localises to the cytoplasm. It catalyses the reaction N(6)-carboxybiotinyl-L-lysyl-[protein] + acetyl-CoA = N(6)-biotinyl-L-lysyl-[protein] + malonyl-CoA. It functions in the pathway lipid metabolism; malonyl-CoA biosynthesis; malonyl-CoA from acetyl-CoA: step 1/1. Functionally, component of the acetyl coenzyme A carboxylase (ACC) complex. Biotin carboxylase (BC) catalyzes the carboxylation of biotin on its carrier protein (BCCP) and then the CO(2) group is transferred by the transcarboxylase to acetyl-CoA to form malonyl-CoA. The chain is Acetyl-coenzyme A carboxylase carboxyl transferase subunit beta from Pseudomonas fluorescens (strain Pf0-1).